A 419-amino-acid chain; its full sequence is Ubiquitin receptor RAD23c (419 aa).

In terms of domain architecture, Ubiquitin-like spans 1–79 (MKIFVKTLKG…IVIMMNKSKP (79 aa)). Low complexity predominate over residues 83-118 (AASSASAGTSQAKSIPPSTSQPSISPQTPASVSAPV). The tract at residues 83-172 (AASSASAGTS…DSAPVGSQGD (90 aa)) is disordered. Residues 119–135 (APAPTRPPPPAPTPTPA) are compositionally biased toward pro residues. The segment covering 136-146 (PVAATETVTTP) has biased composition (low complexity). Residues 185-228 (SNLESTIQQILDMGGGTWDRETVVLALRAAFNNPERAVEYLYTG) enclose the UBA 1 domain. The interval 235–282 (VPPVARPPASAGQPANPPAQTQQPAAAPASGPNANPLDLFPQGLPNVG) is disordered. Residues 245 to 270 (AGQPANPPAQTQQPAAAPASGPNANP) are compositionally biased toward low complexity. One can recognise an STI1 domain in the interval 288–331 (GTLDFLRNSQQFQALRAMVQANPQVLQPMLQELGKQNPNLMRLI). The 42-residue stretch at 372-413 (THEEREAIERLEAMGFERALVLEVFFACNKNEELAANYLLDH) folds into the UBA 2 domain.

The protein belongs to the RAD23 family. As to quaternary structure, interacts with 'Lys-48'-linked polyubiquitin chains via its both UBA domains. Interacts with RPN10 via its ubiquitin-like domain. Widely expressed in the whole plant.

The protein localises to the nucleus. The protein resides in the cytoplasm. In terms of biological role, may be involved in nucleotide excision repair. Binds and presumably selects ubiquitin-conjugates for destruction. Prefers multiubiquitin chains rather than single ubiquitins, with a binding affinity for 'Lys-48'-linked ubiquitin chains. Acts as a ubiquitin receptor that associates with the 26S proteasomal docking subunit RPN10 for the indirect recognition of ubiquitinated substrates of ubiquitin/26S proteasome-mediated proteolysis (UPP). Involved in UV tolerance in hypocotyls, specifically in dark conditions. The sequence is that of Ubiquitin receptor RAD23c from Arabidopsis thaliana (Mouse-ear cress).